Reading from the N-terminus, the 88-residue chain is Exodeoxyribonuclease 7 small subunit (88 aa).

A disordered region spans residues 69–88 (DPMRPDDGEPFDPSIVSTSQ).

It belongs to the XseB family. As to quaternary structure, heterooligomer composed of large and small subunits.

It localises to the cytoplasm. It carries out the reaction Exonucleolytic cleavage in either 5'- to 3'- or 3'- to 5'-direction to yield nucleoside 5'-phosphates.. Its function is as follows. Bidirectionally degrades single-stranded DNA into large acid-insoluble oligonucleotides, which are then degraded further into small acid-soluble oligonucleotides. The protein is Exodeoxyribonuclease 7 small subunit of Xylella fastidiosa (strain M12).